We begin with the raw amino-acid sequence, 104 residues long: Endogenous retrovirus group K member 21 Rec protein (104 aa).

Positions 1–48 (MHPSEMQRKAPPRRRRHRNRAPLTHKMNKMVTSEQMKLPSTKKAEPPT) are disordered. Residues 10–20 (APPRRRRHRNR) show a composition bias toward basic residues. A Nuclear localization signal motif is present at residues 13–20 (RRRRHRNR). Residues 49-58 (WAQLKKLTQL) carry the Nuclear export signal motif.

In terms of assembly, forms homodimers, homotrimers, and homotetramers via a C-terminal domain. Associates with XPO1 and with ZNF145.

It is found in the cytoplasm. The protein resides in the nucleus. The protein localises to the nucleolus. Its function is as follows. Retroviral replication requires the nuclear export and translation of unspliced, singly-spliced and multiply-spliced derivatives of the initial genomic transcript. Rec interacts with a highly structured RNA element (RcRE) present in the viral 3'LTR and recruits the cellular nuclear export machinery. This permits export to the cytoplasm of unspliced genomic or incompletely spliced subgenomic viral transcripts. The chain is Endogenous retrovirus group K member 21 Rec protein (ERVK-21) from Homo sapiens (Human).